We begin with the raw amino-acid sequence, 428 residues long: CinA-like protein (428 aa).

Belongs to the CinA family.

The polypeptide is CinA-like protein (Gemmatimonas aurantiaca (strain DSM 14586 / JCM 11422 / NBRC 100505 / T-27)).